A 342-amino-acid polypeptide reads, in one-letter code: Lipase B (342 aa).

The first 18 residues, 1-18, serve as a signal peptide directing secretion; that stretch reads MKLLSLTGVAGVLATCVA. The propeptide occupies 19–25; that stretch reads ATPLVKR. The cysteines at positions 47 and 89 are disulfide-linked. The N-linked (GlcNAc...) asparagine glycan is linked to Asn99. Active-site residues include Ser130, Asp212, and His249. Disulfide bonds link Cys241–Cys283 and Cys318–Cys336.

The enzyme catalyses a triacylglycerol + H2O = a diacylglycerol + a fatty acid + H(+). In terms of biological role, hydrolysis of triglycerides. Is very stereospecific both in hydrolysis and in organic synthesis and has a potentially important application in glucolipid synthesis. The protein is Lipase B of Pseudozyma antarctica (Yeast).